A 1262-amino-acid chain; its full sequence is Tau-tubulin kinase homolog Asator (1262 aa).

A disordered region spans residues 13–35 (NASAPDDGNQSCQPSSKQDQYLS). Polar residues predominate over residues 20 to 35 (GNQSCQPSSKQDQYLS). The region spanning 173-436 (WKVVRKIGGG…MLIGLFERCM (264 aa)) is the Protein kinase domain. ATP-binding positions include 179–187 (IGGGGFGEI) and Lys-202. Asp-293 functions as the Proton acceptor in the catalytic mechanism. Disordered stretches follow at residues 662 to 724 (TVTN…TSNA), 755 to 792 (RSAT…ARSS), and 984 to 1003 (KDSA…SRHR). Positions 667–679 (KTSEVNRSTEEQK) are enriched in basic and acidic residues. Positions 755–776 (RSATSTNLRPSSSASQRINSGS) are enriched in polar residues.

It belongs to the protein kinase superfamily. CK1 Ser/Thr protein kinase family. As to quaternary structure, interacts with Mgtor. Mg(2+) serves as cofactor. In terms of tissue distribution, detected in larval brain.

The protein localises to the cytoplasm. It localises to the cytoskeleton. It is found in the spindle. The enzyme catalyses L-seryl-[protein] + ATP = O-phospho-L-seryl-[protein] + ADP + H(+). It catalyses the reaction L-threonyl-[protein] + ATP = O-phospho-L-threonyl-[protein] + ADP + H(+). In terms of biological role, probable serine/threonine protein kinase. This Drosophila melanogaster (Fruit fly) protein is Tau-tubulin kinase homolog Asator.